We begin with the raw amino-acid sequence, 492 residues long: Catalase isozyme B (492 aa).

The interval 1-20 is disordered; the sequence is MDPYKHRPSSGSNSTFWTTN. Positions 9-20 are enriched in polar residues; that stretch reads SSGSNSTFWTTN. Heme is bound at residue arginine 62. The active site involves histidine 65. Arginine 102 is a binding site for heme. The active site involves asparagine 138. A heme-binding site is contributed by phenylalanine 151. The residue at position 210 (tyrosine 210) is a Phosphotyrosine. Positions 325–348 form a cross-link, 3-(S-cysteinyl)-tyrosine (Cys-Tyr); the sequence is CPAIIVPGIHYSDDKLLQTRIFSY. Heme-binding residues include arginine 344, tyrosine 348, and arginine 355. Residues 484 to 492 carry the Peroxisome targeting signal motif; that stretch reads SRLNLKPNM.

The protein belongs to the catalase family. Homotetramer. Interacts with GLO1 and GLO4; these interactions are disturbed by alpha-hydroxy-2-pyridinemethanesulfonic acid (HPMS) and salicylic acid (SA). Interacts with STRK1 at the plasma membrane. Requires heme as cofactor. Predominantly expressed in roots and, at low levels, in leaves (e.g. sheaths). Detected in seeds. Also present in panicles and culms. Observed in stems and anthers.

The protein resides in the peroxisome. The protein localises to the glyoxysome. It localises to the cell membrane. The enzyme catalyses 2 H2O2 = O2 + 2 H2O. With respect to regulation, strongly inhibited by beta-mercaptoethanol, sodium azide and potassium cyanide. Slightly repressed by 3-amino-1,2,4-triazole (3-AT). Activity is repressed proportionally to increased concentration of NaCl, KCl, LiCl and MgCl(2). Occurs in almost all aerobically respiring organisms and serves to protect cells from the toxic effects of hydrogen peroxide. May prevent the excessive accumulation of H(2)O(2) during water stress in response to the accumulation of abscisic acid (ABA). Involved in the modulation of ROS levels related to root growth regulation. Required for pollen viability and floret fertility upon heat stress (HS) by detoxifying reactive oxygen species (ROS) and malondialdehyde (MDA) accumulation in developing anthers exposed to HS. In Oryza sativa subsp. japonica (Rice), this protein is Catalase isozyme B (CATB).